The sequence spans 642 residues: Poly(A) polymerase beta (642 aa).

ATP contacts are provided by residues 101–103 (FGS), threonine 110, 114–116 (DID), aspartate 168, lysine 229, tyrosine 238, and 247–248 (GV). Residues aspartate 114, aspartate 116, and aspartate 168 each coordinate Mg(2+). Disordered stretches follow at residues 530-553 (SENSMTAPSPTGTMKTGPLTGNPQ) and 620-642 (LVNHPSRPSGNTATNIPNPILGV). The span at 620 to 636 (LVNHPSRPSGNTATNIP) shows a compositional bias: polar residues.

The protein belongs to the poly(A) polymerase family. As to quaternary structure, interacts with GSG1. The cofactor is Mg(2+). Requires Mn(2+) as cofactor. As to expression, testis specific.

The protein resides in the cytoplasm. The protein localises to the nucleus. The catalysed reaction is RNA(n) + ATP = RNA(n)-3'-adenine ribonucleotide + diphosphate. This Mus musculus (Mouse) protein is Poly(A) polymerase beta.